Consider the following 702-residue polypeptide: Polyribonucleotide nucleotidyltransferase 1 (702 aa).

2 residues coordinate Mg(2+): Asp483 and Asp489. The 60-residue stretch at Pro550–Ile609 folds into the KH domain. The region spanning Gly619–Lys687 is the S1 motif domain.

This sequence belongs to the polyribonucleotide nucleotidyltransferase family. Mg(2+) is required as a cofactor.

It localises to the cytoplasm. The catalysed reaction is RNA(n+1) + phosphate = RNA(n) + a ribonucleoside 5'-diphosphate. Its function is as follows. Involved in mRNA degradation. Catalyzes the phosphorolysis of single-stranded polyribonucleotides processively in the 3'- to 5'-direction. The protein is Polyribonucleotide nucleotidyltransferase 1 of Alkaliphilus metalliredigens (strain QYMF).